The chain runs to 406 residues: 2,3-diketo-5-methylthiopentyl-1-phosphate enolase (406 aa).

Lys-94 acts as the Proton acceptor in catalysis. Substrate is bound by residues Lys-143, Lys-169–Glu-172, His-260, Gly-332, and Gly-354–Gly-355. The Mg(2+) site is built by Lys-169, Asp-171, and Glu-172. Lys-169 bears the N6-carboxylysine mark.

Belongs to the RuBisCO large chain family. Type IV subfamily. In terms of assembly, homodimer. The cofactor is Mg(2+).

It carries out the reaction 5-methylsulfanyl-2,3-dioxopentyl phosphate = 2-hydroxy-5-methylsulfanyl-3-oxopent-1-enyl phosphate. It participates in amino-acid biosynthesis; L-methionine biosynthesis via salvage pathway; L-methionine from S-methyl-5-thio-alpha-D-ribose 1-phosphate: step 3/6. Its function is as follows. Catalyzes the enolization of 2,3-diketo-5-methylthiopentyl-1-phosphate (DK-MTP-1-P) into 2-hydroxy-3-keto-5-methylthiopentenyl-1-phosphate (HK-MTPenyl-1-P). The polypeptide is 2,3-diketo-5-methylthiopentyl-1-phosphate enolase (Bacillus pumilus (strain SAFR-032)).